The sequence spans 440 residues: 23S rRNA (uracil(1939)-C(5))-methyltransferase RlmD (440 aa).

Residues 11–69 (STLDTKHQPVTIERLDHQGSGLAFLHKKPLFVDGALPGEEVLIQLTENKSKYARGQLIK) form the TRAM domain. [4Fe-4S] cluster contacts are provided by cysteine 82, cysteine 88, cysteine 91, and cysteine 169. S-adenosyl-L-methionine-binding residues include glutamine 272, phenylalanine 301, asparagine 306, glutamate 322, asparagine 349, and aspartate 370. The Nucleophile role is filled by cysteine 396.

This sequence belongs to the class I-like SAM-binding methyltransferase superfamily. RNA M5U methyltransferase family. RlmD subfamily.

It catalyses the reaction uridine(1939) in 23S rRNA + S-adenosyl-L-methionine = 5-methyluridine(1939) in 23S rRNA + S-adenosyl-L-homocysteine + H(+). Its function is as follows. Catalyzes the formation of 5-methyl-uridine at position 1939 (m5U1939) in 23S rRNA. This is 23S rRNA (uracil(1939)-C(5))-methyltransferase RlmD from Vibrio cholerae serotype O1 (strain ATCC 39541 / Classical Ogawa 395 / O395).